The following is a 48-amino-acid chain: uncharacterized protein (48 aa).

A helical membrane pass occupies residues I6–L26.

It localises to the host membrane. This is an uncharacterized protein from Spiroplasma melliferum (SpV4).